The chain runs to 241 residues: ATP synthase subunit a (241 aa).

7 helical membrane-spanning segments follow: residues 29–49 (NSSLFMMISVVSVILFLLLGV), 86–106 (IPLVFTVFTFTLSCNLVGMLP), 114–134 (HVIVTFALSMIVFTYTTIVGF), 144–164 (ILLPEGIPSWLAPMMVFIKLF), 177–197 (LAANMIAGHTIIKVVAGFIMN), 200–220 (LILTPIPFLFIIALIGFEVFV), and 221–241 (AILQAYIFTILTCIYLSDAVK).

The protein belongs to the ATPase A chain family. In terms of assembly, F-type ATPases have 2 components, CF(1) - the catalytic core - and CF(0) - the membrane proton channel. CF(1) has five subunits: alpha(3), beta(3), gamma(1), delta(1), epsilon(1). CF(0) has three main subunits: a(1), b(2) and c(9-12). The alpha and beta chains form an alternating ring which encloses part of the gamma chain. CF(1) is attached to CF(0) by a central stalk formed by the gamma and epsilon chains, while a peripheral stalk is formed by the delta and b chains.

The protein resides in the cell membrane. Functionally, key component of the proton channel; it plays a direct role in the translocation of protons across the membrane. This is ATP synthase subunit a from Wolbachia sp. subsp. Brugia malayi (strain TRS).